We begin with the raw amino-acid sequence, 560 residues long: Formate--tetrahydrofolate ligase (560 aa).

69–76 (TPAGEGKS) lines the ATP pocket.

The protein belongs to the formate--tetrahydrofolate ligase family.

It carries out the reaction (6S)-5,6,7,8-tetrahydrofolate + formate + ATP = (6R)-10-formyltetrahydrofolate + ADP + phosphate. It functions in the pathway one-carbon metabolism; tetrahydrofolate interconversion. This is Formate--tetrahydrofolate ligase from Bacillus pumilus (strain SAFR-032).